The chain runs to 362 residues: MQAERGARGGRGRRPGRGRPGGDRHSERPGAAAAVARGGGGGGGGDGGGRRGRGRGRGFRGARGGRGGGGAPRGSRREPGGWGAGASAPVEDDSDAETYGEENDEQGNYSKRKIVSNWDRYQDIEKEVNNESGESQRGTDFSVLLSSAGDSFSQFRFAEEKEWDSEASCPKQNSAFYVDSELLVRALQELPLCLRLNVAAELVQGTVPLEVPQVKPKRTDDGKGLGMQLKGPLGPGGRGPIFELKSVAAGCPVLLGKDNPSPGPSRDSQKPTSPLQSAGDHLEEELDLLLNLDAPIKEGDNILPDQTSQDLKSKEDGEVVQEEEVCAKPSVTEEKNMEPEQPSTSKNVTEEELEDWLDSMIS.

Disordered regions lie at residues 1–111 (MQAE…NYSK), 214–237 (VKPKRTDDGKGLGMQLKGPLGPGG), and 253–362 (VLLG…SMIS). The segment covering 8–17 (RGGRGRRPGR) has biased composition (basic residues). Over residues 37-47 (RGGGGGGGGDG) the composition is skewed to gly residues. Residues 50-60 (RRGRGRGRGFR) are compositionally biased toward basic residues. The segment covering 61 to 72 (GARGGRGGGGAP) has biased composition (gly residues). Acidic residues predominate over residues 90–105 (VEDDSDAETYGEENDE). Ser-94 bears the Phosphoserine mark. Residue Lys-230 is modified to N6-methyllysine. Over residues 350 to 362 (EEELEDWLDSMIS) the composition is skewed to acidic residues.

As to quaternary structure, binds Apaf-1, BCL-2 and BAD (Bcl-xl). Highly expressed in testis, ovary, thymus, prostate, spleen, small intestine, colon, heart, skeletal muscle, liver, kidney and pancreas.

The protein resides in the endomembrane system. Functionally, protects against apoptosis mediated by Apaf-1. This is Cell death regulator Aven (AVEN) from Homo sapiens (Human).